The chain runs to 518 residues: GMP synthase [glutamine-hydrolyzing] (518 aa).

Residues 8–201 (TVLIIDFGSQ…VCKISGIKNN (194 aa)) form the Glutamine amidotransferase type-1 domain. Residue Cys85 is the Nucleophile of the active site. Residues His175 and Glu177 contribute to the active site. The region spanning 202–393 (WSMAAYRDQA…LGLPEEFIKR (192 aa)) is the GMPS ATP-PPase domain. Position 229–235 (229–235 (SGGVDSS)) interacts with ATP.

Homodimer.

It carries out the reaction XMP + L-glutamine + ATP + H2O = GMP + L-glutamate + AMP + diphosphate + 2 H(+). It functions in the pathway purine metabolism; GMP biosynthesis; GMP from XMP (L-Gln route): step 1/1. Catalyzes the synthesis of GMP from XMP. The protein is GMP synthase [glutamine-hydrolyzing] of Bartonella bacilliformis (strain ATCC 35685 / KC583 / Herrer 020/F12,63).